We begin with the raw amino-acid sequence, 402 residues long: Pyridinium-3,5-bisthiocarboxylic acid mononucleotide nickel insertion protein (402 aa).

Belongs to the LarC family.

It catalyses the reaction Ni(II)-pyridinium-3,5-bisthiocarboxylate mononucleotide = pyridinium-3,5-bisthiocarboxylate mononucleotide + Ni(2+). Functionally, involved in the biosynthesis of a nickel-pincer cofactor ((SCS)Ni(II) pincer complex). Binds Ni(2+), and functions in nickel delivery to pyridinium-3,5-bisthiocarboxylic acid mononucleotide (P2TMN), to form the mature cofactor. Is thus probably required for the activation of nickel-pincer cofactor-dependent enzymes. In Desulfitobacterium hafniense (strain Y51), this protein is Pyridinium-3,5-bisthiocarboxylic acid mononucleotide nickel insertion protein.